The chain runs to 508 residues: Lysine--tRNA ligase (508 aa).

E416 and E423 together coordinate Mg(2+).

The protein belongs to the class-II aminoacyl-tRNA synthetase family. In terms of assembly, homodimer. It depends on Mg(2+) as a cofactor.

The protein resides in the cytoplasm. It carries out the reaction tRNA(Lys) + L-lysine + ATP = L-lysyl-tRNA(Lys) + AMP + diphosphate. The protein is Lysine--tRNA ligase of Prochlorococcus marinus (strain MIT 9303).